Reading from the N-terminus, the 535-residue chain is Probable cytochrome P450 12b2, mitochondrial (535 aa).

Heme is bound at residue cysteine 479.

This sequence belongs to the cytochrome P450 family. Heme is required as a cofactor.

It is found in the mitochondrion membrane. The sequence is that of Probable cytochrome P450 12b2, mitochondrial (Cyp12b2) from Drosophila melanogaster (Fruit fly).